Consider the following 334-residue polypeptide: Protein-methionine-sulfoxide reductase catalytic subunit MsrP (334 aa).

The segment at residues 1–44 (MKKIRPLTEADVTAESAFFMQRRQVLKALGISAAALSLPSTAQA) is a signal peptide (tat-type signal). Mo-molybdopterin contacts are provided by residues Asn88, 91-92 (YE), Cys146, Thr181, Asn233, Arg238, and 249-251 (GIK).

This sequence belongs to the MsrP family. As to quaternary structure, heterodimer of a catalytic subunit (MsrP) and a heme-binding subunit (MsrQ). Requires Mo-molybdopterin as cofactor. In terms of processing, predicted to be exported by the Tat system. The position of the signal peptide cleavage has not been experimentally proven.

The protein resides in the periplasm. It carries out the reaction L-methionyl-[protein] + a quinone + H2O = L-methionyl-(S)-S-oxide-[protein] + a quinol. The catalysed reaction is L-methionyl-[protein] + a quinone + H2O = L-methionyl-(R)-S-oxide-[protein] + a quinol. Its function is as follows. Part of the MsrPQ system that repairs oxidized periplasmic proteins containing methionine sulfoxide residues (Met-O), using respiratory chain electrons. Thus protects these proteins from oxidative-stress damage caused by reactive species of oxygen and chlorine generated by the host defense mechanisms. MsrPQ is essential for the maintenance of envelope integrity under bleach stress, rescuing a wide series of structurally unrelated periplasmic proteins from methionine oxidation, including the primary periplasmic chaperone SurA and the lipoprotein Pal. The catalytic subunit MsrP is non-stereospecific, being able to reduce both (R-) and (S-) diastereoisomers of methionine sulfoxide. The polypeptide is Protein-methionine-sulfoxide reductase catalytic subunit MsrP (Salmonella dublin (strain CT_02021853)).